The sequence spans 249 residues: Large ribosomal subunit protein uL16m (249 aa).

This sequence belongs to the universal ribosomal protein uL16 family. As to quaternary structure, component of the mitochondrial large ribosomal subunit (mt-LSU). Mature N.crassa 74S mitochondrial ribosomes consist of a small (37S) and a large (54S) subunit. The 37S small subunit contains a 16S ribosomal RNA (16S mt-rRNA) and 32 different proteins. The 54S large subunit contains a 23S rRNA (23S mt-rRNA) and 42 different proteins.

Its subcellular location is the mitochondrion. In terms of biological role, component of the mitochondrial ribosome (mitoribosome), a dedicated translation machinery responsible for the synthesis of mitochondrial genome-encoded proteins, including at least some of the essential transmembrane subunits of the mitochondrial respiratory chain. The mitoribosomes are attached to the mitochondrial inner membrane and translation products are cotranslationally integrated into the membrane. The protein is Large ribosomal subunit protein uL16m (mrpl16) of Neurospora crassa (strain ATCC 24698 / 74-OR23-1A / CBS 708.71 / DSM 1257 / FGSC 987).